The following is a 469-amino-acid chain: 3-isopropylmalate dehydratase large subunit (469 aa).

3 residues coordinate [4Fe-4S] cluster: cysteine 347, cysteine 410, and cysteine 413.

The protein belongs to the aconitase/IPM isomerase family. LeuC type 1 subfamily. In terms of assembly, heterodimer of LeuC and LeuD. Requires [4Fe-4S] cluster as cofactor.

The catalysed reaction is (2R,3S)-3-isopropylmalate = (2S)-2-isopropylmalate. It participates in amino-acid biosynthesis; L-leucine biosynthesis; L-leucine from 3-methyl-2-oxobutanoate: step 2/4. Its function is as follows. Catalyzes the isomerization between 2-isopropylmalate and 3-isopropylmalate, via the formation of 2-isopropylmaleate. The sequence is that of 3-isopropylmalate dehydratase large subunit from Burkholderia orbicola (strain MC0-3).